The primary structure comprises 507 residues: ATP synthase subunit alpha, chloroplastic (507 aa).

Residue 169–176 (IGDRQTGK) coordinates ATP.

This sequence belongs to the ATPase alpha/beta chains family. F-type ATPases have 2 components, CF(1) - the catalytic core - and CF(0) - the membrane proton channel. CF(1) has five subunits: alpha(3), beta(3), gamma(1), delta(1), epsilon(1). CF(0) has four main subunits: a, b, b' and c.

It is found in the plastid. The protein localises to the chloroplast thylakoid membrane. The enzyme catalyses ATP + H2O + 4 H(+)(in) = ADP + phosphate + 5 H(+)(out). Its function is as follows. Produces ATP from ADP in the presence of a proton gradient across the membrane. The alpha chain is a regulatory subunit. This Saccharum hybrid (Sugarcane) protein is ATP synthase subunit alpha, chloroplastic.